The primary structure comprises 260 residues: Snake venom serine protease homolog 1 (260 aa).

Residues 1 to 18 form the signal peptide; it reads MVLIRVLANLLLLQLSYA. Positions 19-24 are excised as a propeptide; that stretch reads QESSEL. The Peptidase S1 domain maps to 25-251; the sequence is VIGGDECDIN…YTDWIEGIIA (227 aa). Cystine bridges form between Cys-31–Cys-165, Cys-52–Cys-68, Cys-100–Cys-258, Cys-144–Cys-212, Cys-176–Cys-191, and Cys-202–Cys-227. N-linked (GlcNAc...) asparagine glycosylation occurs at Asn-253.

The protein belongs to the peptidase S1 family. Snake venom subfamily. Expressed by the venom gland.

It is found in the secreted. Its function is as follows. Snake venom serine protease homolog that may act in the hemostasis system of the prey. The sequence is that of Snake venom serine protease homolog 1 from Bitis gabonica (Gaboon adder).